The chain runs to 199 residues: Recombination protein RecR (199 aa).

Residues 57–72 (CQSCRTYTEESLCPIC) form a C4-type zinc finger. Positions 81 to 176 (STICVVETPA…VISRIAHGVP (96 aa)) constitute a Toprim domain.

It belongs to the RecR family.

Its function is as follows. May play a role in DNA repair. It seems to be involved in an RecBC-independent recombinational process of DNA repair. It may act with RecF and RecO. The chain is Recombination protein RecR from Shewanella sp. (strain MR-4).